Here is a 175-residue protein sequence, read N- to C-terminus: Protein-export protein SecB (175 aa).

This sequence belongs to the SecB family. Homotetramer, a dimer of dimers. One homotetramer interacts with 1 SecA dimer.

The protein localises to the cytoplasm. Its function is as follows. One of the proteins required for the normal export of preproteins out of the cell cytoplasm. It is a molecular chaperone that binds to a subset of precursor proteins, maintaining them in a translocation-competent state. It also specifically binds to its receptor SecA. The sequence is that of Protein-export protein SecB from Ehrlichia chaffeensis (strain ATCC CRL-10679 / Arkansas).